The primary structure comprises 794 residues: MAELPTSHLAAAVLTDGNRALVAVIAVVALAALVLAGVLVRQVLAAGEGTDSMKKIAAAVQEGANAYLARQLRTLGVFAVVVFFLLMLLPADDWNQRAGRSIFFLIGAAFSAATGYIGMWLAVRSNVRVAAAAREATPAPGEPEKDLALVSHKATKIAFRTGGVVGMFTVGLGLLGACCVVLVYAADAPKVLEGFGLGAALIAMFMRVGGGIFTKAADVGADLVGKVEQGIPEDDPRNAATIADNVGDNVGDCAGMAADLFESYAVTLVAALILGKVAFGDFGLAFPLLVPAIGVLTAMIGIFAVAPRRSDRSGMSAINRGFFISAVISLVLVAVAVFVYLPGKYADLDGVTDAAIAGKSGDPRILALVAVAIGIVLAALIQQLTGYFTETTRRPVKDIGKSSLTGPATVVLAGISLGLESAVYTALLIGLGVYGAFLLGGTSIMLALFAVALAGTGLLTTVGVIVAMDTFGPVSDNAQGIAEMSGDVEGAGAQVLTDLDAVGNTTKAITKGIAIATAVLAAAALFGSYRDAITTGAADVGEKLSGEGAPMTLMMDISQPNNLVGLIAGAAVVFLFSGLAINAVSRSAGAVVYEVRRQFRERPGIMDYSEKPEYGKVVDICTRDALRELATPGLLAVMAPIFIGFTLGVGALGAFLAGAIGAGTLMAVFLANSGGSWDNAKKLVEDGHHGGKGSEAHAATVIGDTVGDPFKDTAGPAINPLLKVMNLVALLIAPAVIKFSYGADKSVVVRVLIAVVAFAVIAAAVYVSKRRGIAMGDEDDADPEPKSADPAVVS.

Helical transmembrane passes span 20–40 (ALVA…GVLV), 74–94 (TLGV…ADDW), 102–122 (IFFL…MWLA), 163–183 (GVVG…VVLV), and 194–214 (GFGL…GIFT). Residue lysine 215 participates in substrate binding. Residues aspartate 218, aspartate 222, asparagine 245, and aspartate 248 each contribute to the Mg(2+) site. 6 consecutive transmembrane segments (helical) span residues 264-284 (YAVT…DFGL), 285-305 (AFPL…IFAV), 321-341 (GFFI…FVYL), 365-385 (ILAL…QQLT), 422-442 (AVYT…LGGT), and 446-466 (LALF…GVIV). Position 476 (aspartate 476) interacts with Mg(2+). 3 helical membrane-spanning segments follow: residues 508–528 (AITK…LFGS), 564–584 (VGLI…INAV), and 641–661 (IFIG…GAIG). Ca(2+) is bound by residues aspartate 678, aspartate 704, and aspartate 708. Lysine 711 contacts substrate. A run of 2 helical transmembrane segments spans residues 717–737 (AINP…PAVI) and 747–767 (VVVR…AVYV).

The protein belongs to the H(+)-translocating pyrophosphatase (TC 3.A.10) family. K(+)-insensitive subfamily. As to quaternary structure, homodimer. It depends on Mg(2+) as a cofactor.

The protein localises to the cell membrane. It catalyses the reaction diphosphate + H2O + H(+)(in) = 2 phosphate + 2 H(+)(out). Proton pump that utilizes the energy of pyrophosphate hydrolysis as the driving force for proton movement across the membrane. Generates a proton motive force. The polypeptide is K(+)-insensitive pyrophosphate-energized proton pump (Streptomyces coelicolor (strain ATCC BAA-471 / A3(2) / M145)).